A 302-amino-acid polypeptide reads, in one-letter code: tRNA pseudouridine synthase B (302 aa).

Aspartate 45 acts as the Nucleophile in catalysis.

Belongs to the pseudouridine synthase TruB family. Type 1 subfamily.

The enzyme catalyses uridine(55) in tRNA = pseudouridine(55) in tRNA. Functionally, responsible for synthesis of pseudouridine from uracil-55 in the psi GC loop of transfer RNAs. This is tRNA pseudouridine synthase B from Francisella tularensis subsp. holarctica (strain FTNF002-00 / FTA).